A 68-amino-acid polypeptide reads, in one-letter code: Cell division protein ZapB (68 aa).

Residues 3 to 58 (LELLSKLETKIQAALETIELLKMELEEEKQKNHTLNEQNQQLSQDLTSWNEKVTGL) are a coiled coil.

It belongs to the ZapB family. As to quaternary structure, homodimer. The ends of the coiled-coil dimer bind to each other, forming polymers. Interacts with FtsZ.

The protein resides in the cytoplasm. Functionally, non-essential, abundant cell division factor that is required for proper Z-ring formation. It is recruited early to the divisome by direct interaction with FtsZ, stimulating Z-ring assembly and thereby promoting cell division earlier in the cell cycle. Its recruitment to the Z-ring requires functional FtsA or ZipA. The protein is Cell division protein ZapB of Shewanella loihica (strain ATCC BAA-1088 / PV-4).